A 438-amino-acid polypeptide reads, in one-letter code: UDP-N-acetylmuramoylalanine--D-glutamate ligase (438 aa).

112 to 118 contacts ATP; it reads GSNGKST.

Belongs to the MurCDEF family.

Its subcellular location is the cytoplasm. The enzyme catalyses UDP-N-acetyl-alpha-D-muramoyl-L-alanine + D-glutamate + ATP = UDP-N-acetyl-alpha-D-muramoyl-L-alanyl-D-glutamate + ADP + phosphate + H(+). Its pathway is cell wall biogenesis; peptidoglycan biosynthesis. Cell wall formation. Catalyzes the addition of glutamate to the nucleotide precursor UDP-N-acetylmuramoyl-L-alanine (UMA). In Shigella sonnei (strain Ss046), this protein is UDP-N-acetylmuramoylalanine--D-glutamate ligase.